We begin with the raw amino-acid sequence, 535 residues long: Arylsulfatase K (535 aa).

The N-terminal stretch at 1-22 is a signal peptide; the sequence is MLLLWLSVFAASALAAPDRGAG. Ca(2+) is bound by residues aspartate 44 and cysteine 84. The Nucleophile role is filled by cysteine 84. Residue cysteine 84 is modified to 3-oxoalanine (Cys). Asparagine 112 carries an N-linked (GlcNAc...) asparagine glycan. Residue lysine 132 participates in substrate binding. Asparagine 197 carries N-linked (GlcNAc...) asparagine glycosylation. Histidine 255 serves as a coordination point for substrate. N-linked (GlcNAc...) asparagine glycosylation occurs at asparagine 266. The Ca(2+) site is built by aspartate 317 and histidine 318. N-linked (GlcNAc...) asparagine glycosylation is found at asparagine 379, asparagine 417, and asparagine 502.

The protein belongs to the sulfatase family. Requires Ca(2+) as cofactor. Post-translationally, the conversion to 3-oxoalanine (also known as C-formylglycine, FGly), of a serine or cysteine residue in prokaryotes and of a cysteine residue in eukaryotes, is critical for catalytic activity. The 75-kDa precursor undergoes proteolytic processing to yield a 23 kDa form. In terms of processing, N-glycosylated with both high mannose and complex type sugars.

It is found in the secreted. The protein localises to the lysosome. The catalysed reaction is an aryl sulfate + H2O = a phenol + sulfate + H(+). The enzyme catalyses Hydrolysis of the 2-sulfate groups of the 2-O-sulfo-D-glucuronate residues of chondroitin sulfate, heparin and heparitin sulfate.. Catalyzes the hydrolysis of pseudosubstrates such as p-nitrocatechol sulfate and p-nitrophenyl sulfate. Catalyzes the hydrolysis of the 2-sulfate groups of the 2-O-sulfo-D-glucuronate residues of chondroitin sulfate, heparin and heparitin sulfate. Acts selectively on 2-sulfoglucuronate and lacks activity against 2-sulfoiduronate. This is Arylsulfatase K (ARSK) from Canis lupus familiaris (Dog).